The sequence spans 492 residues: Glutamyl-tRNA(Gln) amidotransferase subunit A (492 aa).

Catalysis depends on charge relay system residues K78 and S158. S182 serves as the catalytic Acyl-ester intermediate.

It belongs to the amidase family. GatA subfamily. In terms of assembly, heterotrimer of A, B and C subunits.

It carries out the reaction L-glutamyl-tRNA(Gln) + L-glutamine + ATP + H2O = L-glutaminyl-tRNA(Gln) + L-glutamate + ADP + phosphate + H(+). Its function is as follows. Allows the formation of correctly charged Gln-tRNA(Gln) through the transamidation of misacylated Glu-tRNA(Gln) in organisms which lack glutaminyl-tRNA synthetase. The reaction takes place in the presence of glutamine and ATP through an activated gamma-phospho-Glu-tRNA(Gln). The sequence is that of Glutamyl-tRNA(Gln) amidotransferase subunit A from Parvibaculum lavamentivorans (strain DS-1 / DSM 13023 / NCIMB 13966).